The following is a 242-amino-acid chain: MAPK-interacting and spindle-stabilizing protein-like (242 aa).

2 disordered regions span residues 1–145 (MSDE…SLGP) and 192–242 (PPGA…HSYH). At Ser-2 the chain carries N-acetylserine. 3 positions are modified to phosphoserine: Ser-2, Ser-6, and Ser-15. The segment covering 13 to 29 (EQSSAKPPAVTNTKAGH) has biased composition (polar residues). Over residues 30 to 43 (SSQGWPGSSPWSNP) the composition is skewed to low complexity. Composition is skewed to pro residues over residues 44-53 (SAPPAMPSGL) and 75-114 (SMPPTGPPPGPPGPFPPPGPSCPPPGVPYPAPAVPGPGPT). The span at 192–210 (PPGAWGPAAPYPGPAGSYP) shows a compositional bias: low complexity.

It belongs to the MISS family.

This chain is MAPK-interacting and spindle-stabilizing protein-like (Mapk1ip1l), found in Mus musculus (Mouse).